We begin with the raw amino-acid sequence, 718 residues long: Myeloperoxidase (718 aa).

Residues 1 to 15 (MKLLLALAGLLAPLA) form the signal peptide. Residues 16 to 138 (MLQTSNGATP…SSGCAYQDVR (123 aa)) constitute a propeptide that is removed on maturation. N-linked (GlcNAc...) asparagine glycosylation is present at Asn113. Cys141 and Cys154 form a disulfide bridge. Position 234 (Asp234) interacts with heme b. His235 acts as the Proton acceptor in catalysis. Asp236 lines the Ca(2+) pocket. Disulfide bonds link Cys255–Cys265 and Cys259–Cys283. A Cysteine sulfenic acid (-SOH) modification is found at Cys290. Asn297 carries N-linked (GlcNAc...) asparagine glycosylation. Ca(2+) contacts are provided by Thr308, Phe310, Asp312, and Ser314. Asn329 and Asn365 each carry an N-linked (GlcNAc...) asparagine glycan. Cys361 and Cys372 are oxidised to a cystine. Residues Glu382 and Met383 each coordinate heme b. The N-linked (GlcNAc...) asparagine glycan is linked to Asn457. His476 provides a ligand contact to heme b. 2 cysteine pairs are disulfide-bonded: Cys580-Cys637 and Cys678-Cys704. Asn711 carries N-linked (GlcNAc...) asparagine glycosylation.

The protein belongs to the peroxidase family. XPO subfamily. In terms of assembly, homodimer; disulfide-linked. Each monomer consists of a light and a heavy chain. Found in a complex with CP and LTF; interacts directly with CP, which protects CP antioxidant properties by MPO. It depends on Ca(2+) as a cofactor. Heme b is required as a cofactor.

The protein localises to the lysosome. The enzyme catalyses chloride + H2O2 + H(+) = hypochlorous acid + H2O. In terms of biological role, part of the host defense system of polymorphonuclear leukocytes. It is responsible for microbicidal activity against a wide range of organisms. In the stimulated PMN, MPO catalyzes the production of hypohalous acids, primarily hypochlorous acid in physiologic situations, and other toxic intermediates that greatly enhance PMN microbicidal activity. Mediates the proteolytic cleavage of alpha-1-microglobulin to form t-alpha-1-microglobulin, which potently inhibits oxidation of low density lipoprotein particles and limits vascular damage. The protein is Myeloperoxidase (Mpo) of Mus musculus (Mouse).